Here is a 295-residue protein sequence, read N- to C-terminus: Non-selective voltage-gated ion channel VDAC2 (295 aa).

The ATP site is built by lysine 24 and lysine 32. N6-acetyllysine; alternate is present on lysine 32. Lysine 32 bears the N6-succinyllysine; alternate mark. Lysine 32 is covalently cross-linked (Glycyl lysine isopeptide (Lys-Gly) (interchain with G-Cter in ubiquitin); alternate). The next 2 beta stranded transmembrane spans lie at 38–45 (LVKLDVKT) and 51–60 (VEFSTSGSSN). A Glycyl lysine isopeptide (Lys-Gly) (interchain with G-Cter in ubiquitin) cross-link involves residue lysine 65. A beta stranded membrane pass occupies residues 66-76 (VSGTLETKYKW). Tyrosine 79 is subject to Phosphotyrosine. 3 consecutive transmembrane segments (beta stranded) span residues 81–88 (LTFTEKWN), 92–100 (TLGTEIAIE), and 107–116 (LKLTFDTTFS). A Phosphothreonine modification is found at threonine 119. Lysine 121 is modified (N6-acetyllysine; alternate). A Glycyl lysine isopeptide (Lys-Gly) (interchain with G-Cter in ubiquitin); alternate cross-link involves residue lysine 121. Residue lysine 122 forms a Glycyl lysine isopeptide (Lys-Gly) (interchain with G-Cter in ubiquitin) linkage. The next 4 beta stranded transmembrane spans lie at 122-131 (KSGKIKSAYK), 135-144 (INLGCDVDFD), 148-157 (PAIHGSAVFG), and 161-170 (WLAGYQMTFD). Lysine 173 participates in a covalent cross-link: Glycyl lysine isopeptide (Lys-Gly) (interchain with G-Cter in ubiquitin). The next 6 membrane-spanning stretches (beta stranded) occupy residues 177–187 (TRSNFAVGYRT), 190–197 (FQLHTNVN), 201–210 (EFGGSIYQKV), 214–222 (FDTSVNLAW), 229–238 (TRFGIAAKYQ), and 243–250 (ASISAKVN). A Phosphoserine modification is found at serine 252. Residues 254–256 (LIG) and 272–276 (SALVD) each bind NAD(+). Beta stranded transmembrane passes span 254 to 263 (LIGVGYTQTL) and 267 to 275 (VKLTLSALV). Lysine 278 carries the N6-acetyllysine; alternate modification. A Glycyl lysine isopeptide (Lys-Gly) (interchain with G-Cter in ubiquitin); alternate cross-link involves residue lysine 278. A beta stranded membrane pass occupies residues 285-295 (HKLGLALELEA).

It belongs to the eukaryotic mitochondrial porin family. In terms of assembly, monomer, homodimer and higher order oligomers; formation of higher order structures is necessary for scramblase activity. Interacts with ARMC12 in a TBC1D21-dependent manner. Interacts with KLC3. Interacts with SPATA33. Interacts with PPP3CC in a SPATA33-dependent manner. Ubiquitinated by PRKN during mitophagy, leading to its degradation and enhancement of mitophagy. Deubiquitinated by USP30. In terms of tissue distribution, highest levels of expression detected in testis, less but still abundant expression in heart, kidney, brain, and skeletal muscle. Expressed in the sperm midpiece (at protein level).

The protein resides in the mitochondrion outer membrane. It localises to the membrane. The enzyme catalyses chloride(in) = chloride(out). The catalysed reaction is K(+)(in) = K(+)(out). It carries out the reaction a 1,2-diacyl-sn-glycero-3-phospho-L-serine(in) = a 1,2-diacyl-sn-glycero-3-phospho-L-serine(out). It catalyses the reaction a 1,2-diacyl-sn-glycero-3-phosphocholine(in) = a 1,2-diacyl-sn-glycero-3-phosphocholine(out). The enzyme catalyses a 1,2-diacyl-sn-glycero-3-phospho-(1D-myo-inositol)(in) = a 1,2-diacyl-sn-glycero-3-phospho-(1D-myo-inositol)(out). Non-selective voltage-gated ion channel that mediates the transport of anions and cations through the mitochondrion outer membrane and plasma membrane. The channel adopts an open conformation at zero mV and a closed conformation at both positive and negative potentials. There are two populations of channels; the main that functions in a lower open-state conductance with lower ion selectivity, that switch, in a voltage-dependent manner, from the open to a low-conducting 'closed' state and the other that has a normal ion selectivity in the typical high conductance, 'open' state. Binds various lipids, including the sphingolipid ceramide, the phospholipid phosphatidylcholine, and the sterols cholesterol and oxysterol. Binding of ceramide promotes the mitochondrial outer membrane permeabilization (MOMP) apoptotic pathway. In terms of biological role, catalyzes the scrambling of phospholipids across the outer mitochondrial membrane; the mechanism is unrelated to channel activity and is capable of translocating both anionic and zwitterionic phospholipids. This Mus musculus (Mouse) protein is Non-selective voltage-gated ion channel VDAC2.